The following is a 269-amino-acid chain: Thiazole synthase (269 aa).

K105 acts as the Schiff-base intermediate with DXP in catalysis. Residues G166, 192-193 (AG), and 214-215 (NT) contribute to the 1-deoxy-D-xylulose 5-phosphate site. The tract at residues 245-269 (AMSAQDAAQPSTPVLGTPFWHHDHG) is disordered.

It belongs to the ThiG family. As to quaternary structure, homotetramer. Forms heterodimers with either ThiH or ThiS.

The protein localises to the cytoplasm. The enzyme catalyses [ThiS sulfur-carrier protein]-C-terminal-Gly-aminoethanethioate + 2-iminoacetate + 1-deoxy-D-xylulose 5-phosphate = [ThiS sulfur-carrier protein]-C-terminal Gly-Gly + 2-[(2R,5Z)-2-carboxy-4-methylthiazol-5(2H)-ylidene]ethyl phosphate + 2 H2O + H(+). Its pathway is cofactor biosynthesis; thiamine diphosphate biosynthesis. Catalyzes the rearrangement of 1-deoxy-D-xylulose 5-phosphate (DXP) to produce the thiazole phosphate moiety of thiamine. Sulfur is provided by the thiocarboxylate moiety of the carrier protein ThiS. In vitro, sulfur can be provided by H(2)S. This is Thiazole synthase from Paracidovorax citrulli (strain AAC00-1) (Acidovorax citrulli).